The primary structure comprises 83 residues: Hainantoxin-III 4 (83 aa).

The first 21 residues, 1–21 (MKASMYLALAGLVLLFVVGYA), serve as a signal peptide directing secretion. A propeptide spanning residues 22-48 (SESEEKEFPRELLSKIFAVDDFKGKER) is cleaved from the precursor. 3 disulfides stabilise this stretch: cysteine 50-cysteine 65, cysteine 57-cysteine 70, and cysteine 64-cysteine 77. Leucine 81 carries the leucine amide modification.

This sequence belongs to the neurotoxin 10 (Hwtx-1) family. 15 (Hntx-3) subfamily. Monomer. In terms of tissue distribution, expressed by the venom gland.

The protein resides in the secreted. Selective antagonist of neuronal tetrodotoxin (TTX)-sensitive voltage-gated sodium channels (IC(50)=1270 nM on Nav1.1/SCN1A, 270 nM on Nav1.2/SCN2A, 491 nM on Nav1.3/SCN3A and 232 nM on Nav1.7/SCN9A). This toxin suppress Nav1.7 current amplitude without significantly altering the activation, inactivation, and repriming kinetics. Short extreme depolarizations partially activate the toxin-bound channel, indicating voltage-dependent inhibition of this toxin. This toxin increases the deactivation of the Nav1.7 current after extreme depolarizations. The toxin-Nav1.7 complex is gradually dissociated upon prolonged strong depolarizations in a voltage-dependent manner, and the unbound toxin rebinds to Nav1.7 after a long repolarization. Moreover, analysis of chimeric channels showed that the DIIS3-S4 linker is critical for toxin binding to Nav1.7. These data are consistent with this toxin interacting with Nav1.7 site 4 and trapping the domain II voltage sensor in the closed state. The sequence is that of Hainantoxin-III 4 from Cyriopagopus hainanus (Chinese bird spider).